Consider the following 125-residue polypeptide: Small ribosomal subunit protein bS6 (125 aa).

Belongs to the bacterial ribosomal protein bS6 family.

Binds together with bS18 to 16S ribosomal RNA. This chain is Small ribosomal subunit protein bS6, found in Campylobacter jejuni (strain RM1221).